The following is a 282-amino-acid chain: 5'-nucleotidase SurE (282 aa).

Aspartate 12, aspartate 13, serine 43, and asparagine 98 together coordinate a divalent metal cation.

Belongs to the SurE nucleotidase family. It depends on a divalent metal cation as a cofactor.

The protein resides in the cytoplasm. The enzyme catalyses a ribonucleoside 5'-phosphate + H2O = a ribonucleoside + phosphate. Its function is as follows. Nucleotidase that shows phosphatase activity on nucleoside 5'-monophosphates. The chain is 5'-nucleotidase SurE from Hyperthermus butylicus (strain DSM 5456 / JCM 9403 / PLM1-5).